A 2061-amino-acid polypeptide reads, in one-letter code: Myoferlin (2061 aa).

Residues Met1–Tyr101 enclose the C2 1 domain. Residues Met1–Lys2025 are Cytoplasmic-facing. A disordered region spans residues Gly123–Thr172. Acidic residues predominate over residues Asp146 to Arg156. Ser174 carries the post-translational modification Phosphoserine. 2 C2 domains span residues Arg181–Leu300 and Asp339–Phe474. The necessary for interaction with EHD2 stretch occupies residues Lys186 to Lys281. Residues Leu323–Asp342 are disordered. Asp390, Asp396, Asp444, Asp446, and Asp452 together coordinate Ca(2+). Lys553 is modified (N6-acetyllysine). Ser729 is subject to Phosphoserine. N6-acetyllysine is present on Lys884. The disordered stretch occupies residues Glu938–Leu967. 2 C2 domains span residues Gly1123–His1251 and Leu1282–Asp1410. Ca(2+) is bound by residues Asp1155, Asp1161, Asp1217, and Asp1219. Lys1507 is modified (N6-acetyllysine). C2 domains are found at residues Pro1536 to Gly1654 and Gly1772 to Arg1920. Asp1569, Asp1575, Asp1624, Asp1626, Asp1891, Ser1894, and Asp1897 together coordinate Ca(2+). Phosphoserine is present on Ser1915. Residues Trp2026 to Tyr2046 traverse the membrane as a helical segment. The Extracellular portion of the chain corresponds to Ser2047 to Val2061.

This sequence belongs to the ferlin family. In terms of assembly, interacts with DNM2 and KDR. Interacts with EHD1. Interacts with EHD2; the interaction is direct. Interacts with RIPOR2. Requires Ca(2+) as cofactor. In terms of tissue distribution, expressed in myoblast and endothelial cells (at protein level). Highly expressed in cardiac and skeletal muscles. Also present in lung, and at very low levels in kidney, placenta and brain.

The protein resides in the cell membrane. Its subcellular location is the nucleus membrane. The protein localises to the cytoplasmic vesicle membrane. Calcium/phospholipid-binding protein that plays a role in the plasmalemma repair mechanism of endothelial cells that permits rapid resealing of membranes disrupted by mechanical stress. Involved in endocytic recycling. Implicated in VEGF signal transduction by regulating the levels of the receptor KDR. The protein is Myoferlin (MYOF) of Homo sapiens (Human).